The primary structure comprises 266 residues: Putative [LysW]-aminoadipate/[LysW]-glutamate kinase (266 aa).

Residues glycine 36–glycine 37, arginine 63, and asparagine 168 contribute to the substrate site.

The protein belongs to the acetylglutamate kinase family. LysZ subfamily.

It localises to the cytoplasm. It carries out the reaction [amino-group carrier protein]-C-terminal-N-(1,4-dicarboxybutan-1-yl)-L-glutamine + ATP = [amino-group carrier protein]-C-terminal-N-(1-carboxy-5-phosphooxy-5-oxopentan-1-yl)-L-glutamine + ADP. It catalyses the reaction [amino-group carrier protein]-C-terminal-gamma-(L-glutamyl)-L-glutamate + ATP = [amino-group carrier protein]-C-terminal-gamma-(5-phospho-L-glutamyl)-L-glutamate + ADP. It participates in amino-acid biosynthesis; L-lysine biosynthesis via AAA pathway; L-lysine from L-alpha-aminoadipate (Thermus route): step 2/5. It functions in the pathway amino-acid biosynthesis; L-arginine biosynthesis. In terms of biological role, involved in both the arginine and lysine biosynthetic pathways. Phosphorylates the LysW-bound precursors glutamate (for arginine biosynthesis), respectively alpha-aminoadipate (for lysine biosynthesis). The chain is Putative [LysW]-aminoadipate/[LysW]-glutamate kinase from Cenarchaeum symbiosum (strain A).